Reading from the N-terminus, the 256-residue chain is MKPLELDVFLCRTDNFGVLVHDPETGFTAAIDAPEEAPILEAATRRGWKITHIFTTHHHTDHVAANLALKEQFGCEIIGPINEAIAIPGLDRTMADGDSFLFGDHTVKVIETPGHTAGHICYHFVDDKLLFAADTLFALGCGRLFERPAADMWHSLQKLAVLPDETAVYFGHEYTLSNARFALTVDPDNERLKSRAAEIEALRAEGKFTVPTTLGLEKETNPFLRAADPAIRRHLIMEGKTNEEVFAEIRKRKDNF.

Residues His-57, His-59, Asp-61, His-62, His-115, Asp-134, and His-172 each contribute to the Zn(2+) site.

It belongs to the metallo-beta-lactamase superfamily. Glyoxalase II family. In terms of assembly, monomer. Zn(2+) serves as cofactor.

The enzyme catalyses an S-(2-hydroxyacyl)glutathione + H2O = a 2-hydroxy carboxylate + glutathione + H(+). The protein operates within secondary metabolite metabolism; methylglyoxal degradation; (R)-lactate from methylglyoxal: step 2/2. In terms of biological role, thiolesterase that catalyzes the hydrolysis of S-D-lactoyl-glutathione to form glutathione and D-lactic acid. In Rhizobium etli (strain ATCC 51251 / DSM 11541 / JCM 21823 / NBRC 15573 / CFN 42), this protein is Hydroxyacylglutathione hydrolase.